Here is a 440-residue protein sequence, read N- to C-terminus: GTPase Der (440 aa).

2 consecutive EngA-type G domains span residues 4-168 and 177-352; these read PVVA…PPEK and IKIA…GRHS. Residues 10–17, 57–61, 120–123, 183–190, 230–234, and 295–298 contribute to the GTP site; these read GRPNVGKS, DTGGL, NKVE, DTAGM, and NKWD. The KH-like domain maps to 353-437; that stretch reads MRISTPGLNA…PIRFVLRKKT (85 aa).

This sequence belongs to the TRAFAC class TrmE-Era-EngA-EngB-Septin-like GTPase superfamily. EngA (Der) GTPase family. Associates with the 50S ribosomal subunit.

Its function is as follows. GTPase that plays an essential role in the late steps of ribosome biogenesis. The sequence is that of GTPase Der from Pelotomaculum thermopropionicum (strain DSM 13744 / JCM 10971 / SI).